We begin with the raw amino-acid sequence, 130 residues long: Small ribosomal subunit protein uS11 (130 aa).

This sequence belongs to the universal ribosomal protein uS11 family. In terms of assembly, part of the 30S ribosomal subunit. Interacts with proteins S7 and S18. Binds to IF-3.

Its function is as follows. Located on the platform of the 30S subunit, it bridges several disparate RNA helices of the 16S rRNA. Forms part of the Shine-Dalgarno cleft in the 70S ribosome. This chain is Small ribosomal subunit protein uS11, found in Alteromonas mediterranea (strain DSM 17117 / CIP 110805 / LMG 28347 / Deep ecotype).